Reading from the N-terminus, the 117-residue chain is Large ribosomal subunit protein bL20 (117 aa).

The protein belongs to the bacterial ribosomal protein bL20 family.

In terms of biological role, binds directly to 23S ribosomal RNA and is necessary for the in vitro assembly process of the 50S ribosomal subunit. It is not involved in the protein synthesizing functions of that subunit. This is Large ribosomal subunit protein bL20 from Leptospira biflexa serovar Patoc (strain Patoc 1 / Ames).